The sequence spans 643 residues: 1-deoxy-D-xylulose-5-phosphate synthase (643 aa).

Residues H72 and 113–115 (GHA) contribute to the thiamine diphosphate site. A Mg(2+)-binding site is contributed by D144. Thiamine diphosphate-binding positions include 145-146 (GA), N174, Y287, and E370. N174 contacts Mg(2+).

The protein belongs to the transketolase family. DXPS subfamily. Homodimer. Mg(2+) serves as cofactor. Requires thiamine diphosphate as cofactor.

It catalyses the reaction D-glyceraldehyde 3-phosphate + pyruvate + H(+) = 1-deoxy-D-xylulose 5-phosphate + CO2. The protein operates within metabolic intermediate biosynthesis; 1-deoxy-D-xylulose 5-phosphate biosynthesis; 1-deoxy-D-xylulose 5-phosphate from D-glyceraldehyde 3-phosphate and pyruvate: step 1/1. Functionally, catalyzes the acyloin condensation reaction between C atoms 2 and 3 of pyruvate and glyceraldehyde 3-phosphate to yield 1-deoxy-D-xylulose-5-phosphate (DXP). The sequence is that of 1-deoxy-D-xylulose-5-phosphate synthase from Synechococcus sp. (strain CC9605).